The chain runs to 27 residues: Superoxide dismutase [Mn] (27 aa).

It belongs to the iron/manganese superoxide dismutase family. Homodimer. It depends on Mn(2+) as a cofactor.

The enzyme catalyses 2 superoxide + 2 H(+) = H2O2 + O2. Functionally, destroys superoxide anion radicals which are normally produced within the cells and which are toxic to biological systems. The chain is Superoxide dismutase [Mn] (sodA) from Desulfovibrio desulfuricans.